A 739-amino-acid chain; its full sequence is Xylosyl- and glucuronyltransferase LARGE2s (739 aa).

Residues 1–10 (MLCSWRVKLK) are Cytoplasmic-facing. The chain crosses the membrane as a helical; Signal-anchor for type II membrane protein span at residues 11-31 (LLLATITLAVLLSWLYLFVGS). The Lumenal portion of the chain corresponds to 32-739 (LEYGRFLLLP…LKYLTAERNL (708 aa)). Residues 80–105 (AEGSDGNPQWAASAEDGPPLGGERNN) are disordered. Residues Asn105, Asn131, and Asn217 are each glycosylated (N-linked (GlcNAc...) asparagine). Positions 121-396 (LHVAIVCAGH…FLEYDGNLLR (276 aa)) are xylosyltransferase activity. 2 residues coordinate Mn(2+): Asp225 and Asp227. N-linked (GlcNAc...) asparagine glycosylation occurs at Asn255. Residues 397–739 (RELFGCASLP…LKYLTAERNL (343 aa)) are glucuronyltransferase activity. The Mn(2+) site is built by Asp546 and Asp548.

In the C-terminal section; belongs to the glycosyltransferase 49 family. It in the N-terminal section; belongs to the glycosyltransferase 8 family. Mn(2+) serves as cofactor.

The protein resides in the golgi apparatus membrane. It carries out the reaction 3-O-[beta-D-GlcA-(1-&gt;3)-beta-D-Xyl-(1-&gt;4)-Rib-ol-P-Rib-ol-P-3-beta-D-GalNAc-(1-&gt;3)-beta-D-GlcNAc-(1-&gt;4)-(O-6-P-alpha-D-Man)]-Thr-[protein] + UDP-alpha-D-xylose = 3-O-[alpha-D-Xyl-(1-&gt;3)-beta-D-GlcA-(1-&gt;4)-beta-D-Xyl-(1-&gt;4)-Rib-ol-P-Rib-ol-P-3-beta-D-GalNAc-(1-&gt;3)-beta-D-GlcNAc-(1-&gt;4)-(O-6-P-alpha-D-Man)]-Thr-[protein] + UDP + H(+). The catalysed reaction is 3-O-{(1-&gt;[3)-alpha-D-Xyl-(1-&gt;3)-beta-D-GlcA-(1-&gt;](n)-4)-beta-D-Xyl-(1-&gt;4)-Rib-ol-P-Rib-ol-P-3-beta-D-GalNAc-(1-&gt;3)-beta-D-GlcNAc-(1-&gt;4)-O-6-P-alpha-D-Man}-L-Thr-[protein] + UDP-alpha-D-glucuronate = 3-O-{beta-D-GlcA-(1-&gt;[3)-alpha-D-Xyl-(1-&gt;3)-beta-D-GlcA-(1-&gt;](n)-4)-beta-D-Xyl-(1-&gt;4)-Rib-ol-P-Rib-ol-P-3-beta-D-GalNAc-(1-&gt;3)-beta-D-GlcNAc-(1-&gt;4)-O-6-P-alpha-D-Man}-L-Thr-[protein] + UDP + H(+). The enzyme catalyses 3-O-{beta-D-GlcA-(1-&gt;[3)-alpha-D-Xyl-(1-&gt;3)-beta-D-GlcA-(1-&gt;](n)-4)-beta-D-Xyl-(1-&gt;4)-Rib-ol-P-Rib-ol-P-3-beta-D-GalNAc-(1-&gt;3)-beta-D-GlcNAc-(1-&gt;4)-O-6-P-alpha-D-Man}-L-Thr-[protein] + UDP-alpha-D-xylose = 3-O-{(1-&gt;[3)-alpha-D-Xyl-(1-&gt;3)-beta-D-GlcA-(1-&gt;](n+1)-4)-beta-D-Xyl-(1-&gt;4)-Rib-ol-P-Rib-ol-P-3-beta-D-GalNAc-(1-&gt;3)-beta-D-GlcNAc-(1-&gt;4)-O-6-P-alpha-D-Man}-L-Thr-[protein] + UDP + H(+). The protein operates within protein modification; protein glycosylation. Its function is as follows. Bifunctional glycosyltransferase with both alpha-1,3-xylosyltransferase and beta-1,3-glucuronyltransferase activities involved in the maturation of alpha-dystroglycan (DAG1) by glycosylation leading to DAG1 binding to laminin G-like domain-containing extracellular proteins with high affinity and in a phosphorylated-O-mannosyl trisaccharide dependent manner. Elongates the glucuronyl-beta-1,4-xylose-beta disaccharide primer structure by adding repeating units [-3-Xylose-alpha-1,3-GlcA-beta-1-] to produce a heteropolysaccharide. Supports the maturation of DAG1 more effectively than LARGE1. In addition, can modify both heparan sulfate (HS)- and chondroitin/dermatan sulfate (CS/DS)-proteoglycans (PGs), namely GPC4, with a glycosaminoglycan (GAG)-like polysaccharide composed of xylose and glucuronic acid to confer laminin binding. This is Xylosyl- and glucuronyltransferase LARGE2s from Gallus gallus (Chicken).